We begin with the raw amino-acid sequence, 265 residues long: NAD kinase (265 aa).

Asp45 serves as the catalytic Proton acceptor. Residues 45–46 (DG), 121–122 (NE), Arg147, Asp149, Ala184, and Gln221 each bind NAD(+).

It belongs to the NAD kinase family. Requires a divalent metal cation as cofactor.

Its subcellular location is the cytoplasm. The catalysed reaction is NAD(+) + ATP = ADP + NADP(+) + H(+). Its function is as follows. Involved in the regulation of the intracellular balance of NAD and NADP, and is a key enzyme in the biosynthesis of NADP. Catalyzes specifically the phosphorylation on 2'-hydroxyl of the adenosine moiety of NAD to yield NADP. The polypeptide is NAD kinase (Leuconostoc citreum (strain KM20)).